A 325-amino-acid polypeptide reads, in one-letter code: Beta-ketoacyl-[acyl-carrier-protein] synthase III (325 aa).

Catalysis depends on residues Cys-116 and His-252. Residues 253 to 257 are ACP-binding; the sequence is QANLR. Residue Asn-282 is part of the active site.

It belongs to the thiolase-like superfamily. FabH family. As to quaternary structure, homodimer.

It localises to the cytoplasm. The catalysed reaction is malonyl-[ACP] + acetyl-CoA + H(+) = 3-oxobutanoyl-[ACP] + CO2 + CoA. It functions in the pathway lipid metabolism; fatty acid biosynthesis. Its function is as follows. Catalyzes the condensation reaction of fatty acid synthesis by the addition to an acyl acceptor of two carbons from malonyl-ACP. Catalyzes the first condensation reaction which initiates fatty acid synthesis and may therefore play a role in governing the total rate of fatty acid production. Possesses both acetoacetyl-ACP synthase and acetyl transacylase activities. Its substrate specificity determines the biosynthesis of branched-chain and/or straight-chain of fatty acids. This chain is Beta-ketoacyl-[acyl-carrier-protein] synthase III, found in Xanthomonas axonopodis pv. citri (strain 306).